A 186-amino-acid polypeptide reads, in one-letter code: Adenylate kinase isoenzyme 6 homolog (186 aa).

Gly-15, Gly-17, Lys-18, Ser-19, and Thr-20 together coordinate ATP. The NMPbind stretch occupies residues 48 to 71; it reads NLSNIIKDERLYKEFDDELDASIY. Residues 126–136 form an LID region; sequence KRNYTKEKIKN. Arg-127 contributes to the ATP binding site.

Belongs to the adenylate kinase family. AK6 subfamily. Monomer and homodimer. Interacts with small ribosomal subunit protein uS11. Not a structural component of 43S pre-ribosomes, but transiently interacts with them by binding to uS11.

The protein localises to the cytoplasm. It localises to the nucleus. The catalysed reaction is AMP + ATP = 2 ADP. It catalyses the reaction ATP + H2O = ADP + phosphate + H(+). Broad-specificity nucleoside monophosphate (NMP) kinase that catalyzes the reversible transfer of the terminal phosphate group between nucleoside triphosphates and monophosphates. Also has ATPase activity. Involved in the late cytoplasmic maturation steps of the 40S ribosomal particles, specifically 18S rRNA maturation. While NMP activity is not required for ribosome maturation, ATPase activity is. Associates transiently with small ribosomal subunit protein uS11. ATP hydrolysis breaks the interaction with uS11. May temporarily remove uS11 from the ribosome to enable a conformational change of the ribosomal RNA that is needed for the final maturation step of the small ribosomal subunit. Its NMP activity may have a role in nuclear energy homeostasis. This chain is Adenylate kinase isoenzyme 6 homolog, found in Plasmodium falciparum (isolate 3D7).